A 119-amino-acid chain; its full sequence is Large ribosomal subunit protein uL18 (119 aa).

The protein belongs to the universal ribosomal protein uL18 family. As to quaternary structure, part of the 50S ribosomal subunit; part of the 5S rRNA/L5/L18/L25 subcomplex. Contacts the 5S and 23S rRNAs.

Functionally, this is one of the proteins that bind and probably mediate the attachment of the 5S RNA into the large ribosomal subunit, where it forms part of the central protuberance. This Staphylococcus aureus (strain bovine RF122 / ET3-1) protein is Large ribosomal subunit protein uL18.